Consider the following 479-residue polypeptide: MSYRVAKASQYLAITGGGITDIKLAKKSWVFPWQSCTVFDVSPVNYTFEVQAMSSEKLPFVIPAVFTIGPRVDDPHALLLYAMLMSQHDKHSNHVNELVQGVIEGETRVLVASMTMEEVFKGTKEFKKEVFDKVQLELNQFGLVIYNANVKQLVDVPGHEYFSYLGQKTQMEAANQAKIDVAEAKMKGEVGAKERTGLTIQNAAKIDAESKIISTQRLGEGTKEEIKVKTEVKVFQNEKEALVAKADAALAIQKAALSQNSRVAEVEAAKAVALREAELQTKVEKMNALTRTEKLKAEFLSKASVEYETKVQEANWELYNKQKQAEAVLYEKQKQAEATKAAADAAFYSKQKDAEGLVAMADAQGTYLKTLLGAVNNDYSAMRDFLMINNGIYQDIAKTNAVAIRDLQPKISVWNHGGAEQGMNGGGKATMNDIAGLYKMLPPVLDTVYEQTGMQPPAWIGTLRGAEPKQSLHAQQHRG.

Cys-36 carries S-palmitoyl cysteine lipidation. Coiled coils occupy residues 227 to 251 (KVKT…AALA) and 306 to 326 (EYET…KQAE).

Belongs to the band 7/mec-2 family. Flotillin subfamily. May be palmitoylated.

The protein localises to the cell membrane. The protein resides in the membrane. It localises to the caveola. May act as a scaffolding protein within caveolar membranes, functionally participating in formation of caveolae or caveolae-like vesicles. The chain is Flotillin-like protein 3 (FLOT3) from Arabidopsis thaliana (Mouse-ear cress).